The chain runs to 222 residues: UPF0758 protein YE0063 (222 aa).

The MPN domain maps to 100–222; that stretch reads VLQNPEITQK…CVSFAERGWL (123 aa). 3 residues coordinate Zn(2+): H171, H173, and D184. Residues 171 to 184 carry the JAMM motif motif; sequence HNHPSGKAEPSQAD.

Belongs to the UPF0758 family. YicR subfamily.

The sequence is that of UPF0758 protein YE0063 from Yersinia enterocolitica serotype O:8 / biotype 1B (strain NCTC 13174 / 8081).